A 361-amino-acid polypeptide reads, in one-letter code: Deoxyribonuclease-2-beta (361 aa).

Residues 1–27 form the signal peptide; sequence MKQKMMARLLRTSFALLFLGLFGVLGA. Residues asparagine 81, asparagine 103, asparagine 119, and asparagine 278 are each glycosylated (N-linked (GlcNAc...) asparagine).

It belongs to the DNase II family. In terms of tissue distribution, highly expressed in the eye lens and in salivary gland. Detected at lower levels in lung, prostate and lymph node. Isoform 2 is lung specific.

The protein localises to the lysosome. It catalyses the reaction Endonucleolytic cleavage to nucleoside 3'-phosphates and 3'-phosphooligonucleotide end-products.. Hydrolyzes DNA under acidic conditions. Does not require divalent cations for activity. Participates in the degradation of nuclear DNA during lens cell differentiation. This is Deoxyribonuclease-2-beta (DNASE2B) from Homo sapiens (Human).